A 226-amino-acid polypeptide reads, in one-letter code: 8-oxoguanine DNA glycosylase/AP lyase (226 aa).

Catalysis depends on residues Lys-149 and Asp-167.

It belongs to the type-2 OGG1 family.

The enzyme catalyses 2'-deoxyribonucleotide-(2'-deoxyribose 5'-phosphate)-2'-deoxyribonucleotide-DNA = a 3'-end 2'-deoxyribonucleotide-(2,3-dehydro-2,3-deoxyribose 5'-phosphate)-DNA + a 5'-end 5'-phospho-2'-deoxyribonucleoside-DNA + H(+). Functionally, catalyzes the excision of an oxidatively damaged form of guanine (7,8-dihydro-8-oxoguanine = 8-oxoG) from DNA. Also cleaves the DNA backbone at apurinic/apyrimidinic sites (AP sites). This is 8-oxoguanine DNA glycosylase/AP lyase from Aquifex aeolicus (strain VF5).